We begin with the raw amino-acid sequence, 880 residues long: Interference hedgehog (880 aa).

A signal peptide spans 1 to 20 (MTLLTSSLLLFSLLTSRLEA). Topologically, residues 21–703 (IPVLEKSPAH…ETFNMSPMLT (683 aa)) are extracellular. 4 Ig-like C2-type domains span residues 45-142 (PGVR…TARL), 132-232 (PLVV…ERIQ), 252-340 (PHLL…YIKV), and 346-432 (PQIV…LQVN). Cystine bridges form between Cys68-Cys126, Cys173-Cys220, Cys276-Cys324, and Cys367-Cys414. 2 N-linked (GlcNAc...) asparagine glycosylation sites follow: Asn102 and Asn209. A disordered region spans residues 426 to 467 (GTLLQVNPKQIQEPRESGGTHRPKPNQGSKQKQMYPPTPPNV). Fibronectin type-III domains lie at 461 to 567 (PPTP…LQPG) and 575 to 670 (VPEL…TQRP). An N-linked (GlcNAc...) asparagine glycan is attached at Asn466. The heparin site is built by Arg497, Lys501, Lys503, and Arg541. N-linked (GlcNAc...) asparagine glycosylation occurs at Asn557. Residues 662–697 (LKQGRTQRPKTSTTEEPTLQMGDRDTTTPSHNETFN) are disordered. Composition is skewed to polar residues over residues 665-678 (GRTQRPKTSTTEEP) and 688-697 (TTPSHNETFN). An N-linked (GlcNAc...) asparagine glycan is attached at Asn693. Residues 704 to 724 (GTIGGGAVLILLLISTCLCVC) form a helical membrane-spanning segment. Over 725 to 880 (RRRTSRSRGN…SSGSLNSVGV (156 aa)) the chain is Cytoplasmic. Disordered regions lie at residues 728-762 (TSRSRGNNPNKPRMAELRDDFVPLGNCSPTKQRQR) and 775-880 (QQQQ…SVGV). 2 stretches are compositionally biased toward low complexity: residues 823 to 837 (RAGGSNGSNNGNNNN) and 864 to 880 (SSRSENLSSGSLNSVGV).

This sequence belongs to the immunoglobulin superfamily. IHOG family. Homodimer. Heterotetramer; 2 iHog chains bind 2 hh chains when facilitated by heparin, heparin is required to promote high-affinity interactions between hh and iHog.

The protein localises to the membrane. Mediates response to the active Hedgehog (Hh) protein signal in embryos, functioning upstream or at the level of patched (ptc). This Drosophila sechellia (Fruit fly) protein is Interference hedgehog.